The following is a 247-amino-acid chain: MSKQPDRLFAQPLEQVPDFVFNEDVVRVFPDMIKRSVPGYPTIVENLGVLAARFAQPNTALYDLGASLGAVTQSLRRHVRSEGCRVIAVDNSAAMVERCRQYLTAQDSMFQELLPVQVLDADILALPFEPASVVAMNFTLQFIAPEQRLALLSRIRQALLPGGALILSEKLHFADDQEQNLLNELHLDFKRANGYSELEIAQKRSAIENVMKPDTLHTHTERLRAAGFSKVVPWFQCLNFASLIALP.

Residues Y40, 65-67 (GAS), 90-91 (DN), 122-123 (DI), N137, and R204 contribute to the S-adenosyl-L-methionine site.

It belongs to the class I-like SAM-binding methyltransferase superfamily. Cx-SAM synthase family. In terms of assembly, homodimer.

It catalyses the reaction prephenate + S-adenosyl-L-methionine = carboxy-S-adenosyl-L-methionine + 3-phenylpyruvate + H2O. Its function is as follows. Catalyzes the conversion of S-adenosyl-L-methionine (SAM) to carboxy-S-adenosyl-L-methionine (Cx-SAM). In Pseudomonas putida (strain W619), this protein is Carboxy-S-adenosyl-L-methionine synthase.